Here is a 407-residue protein sequence, read N- to C-terminus: Transmembrane protein 184B (407 aa).

The segment covering 1–28 (MTVRGAALAPDPASPTTTTASPSVSATP) has biased composition (low complexity). The interval 1 to 31 (MTVRGAALAPDPASPTTTTASPSVSATPEGS) is disordered. 7 helical membrane passes run 40 to 60 (FLMT…ALLI), 84 to 104 (ILFI…FFTN), 121 to 141 (FVIY…SAIM), 178 to 198 (LQFC…QAFG), 214 to 234 (VTII…LFYF), 249 to 269 (FFMV…LAIL), and 290 to 310 (VAAG…ALAL). The segment at 369 to 395 (TLEPGPTWRGGTHSLSRSHSLSGARDN) is disordered. Residues serine 388, serine 402, and serine 403 each carry the phosphoserine modification.

Belongs to the TMEM184 family.

The protein resides in the membrane. Its function is as follows. May activate the MAP kinase signaling pathway. In Mus musculus (Mouse), this protein is Transmembrane protein 184B (Tmem184b).